A 724-amino-acid chain; its full sequence is MAQVQQVPSSPMNGIPEKNGNGLSIEESASTAVAALAHIQNGAVLFHGTPTKDLNGASTSIDTDDLQLSPSDLRRRSTRASALKAQEKIKLKDDIVQGPQKRANDDDDMEDEELGDEINEQSAPKKRRLENGKEFDQTCFRFGLRANNEGEVYAMTDESENSSIHESEMEVVRYHYEKMKNKEPDEEQLRERLNMRREAENQLREEEAKLLVLRKMKDSQTRAITKLAAETKAADLAEATSAAYKPAVATNGKSVTNGKNSMIESNNKTMNGLKNLSIPQQLELLQKLSSQSPAAKQAYIMAKKNPAQTTQLFQQLITINNQNLQKQKELSAAETNASASASPAVQQSQQAQQPQQAQITQSKLLNQQTPAQRIQAARLAFRAQADKQLTTIPTQKSQPHDITFLPNPNASAFLALHGLDLVVQHVLKDRSNETPYAGPSYECEECKTECAHTWKAIGSTQDDLHLYCENCVRSAQKRKNRTDQTALLKRAFQKITAQEKLLQEFEKKIAEGQLEQYAEAKAAAPATSQTIPTSSTATVSSIPLVPRLPQIPSSTGSSTPTQAVKTSTPIHSTPKSSSSSAKKTAAQLQQQSMQGMNQLFSTAMLRNNPQMQQMLQMYQALAMGGGAANMANNQMAMLFQAQAMQAAQAQVARAQAAKAQAAQAQAAQAQAQAQANREANQQSMLIQALMSNGQVNVQALQQLQKLTPEQQKALIEVVKRQTRK.

Composition is skewed to polar residues over residues 1–12 (MAQVQQVPSSPM) and 56–70 (GASTSIDTDDLQLSP). 2 disordered regions span residues 1 to 23 (MAQVQQVPSSPMNGIPEKNGNGL) and 55 to 129 (NGAS…KRRL). Residues 85 to 95 (AQEKIKLKDDI) show a composition bias toward basic and acidic residues. Over residues 105-119 (DDDDMEDEELGDEIN) the composition is skewed to acidic residues. Residues 186–216 (EEQLRERLNMRREAENQLREEEAKLLVLRKM) adopt a coiled-coil conformation. 2 disordered regions span residues 328–361 (KELSAAETNASASASPAVQQSQQAQQPQQAQITQ) and 523–590 (AAPA…QLQQ). Positions 332–358 (AAETNASASASPAVQQSQQAQQPQQAQ) are enriched in low complexity. 2 stretches are compositionally biased toward polar residues: residues 527-541 (TSQTIPTSSTATVSS) and 551-564 (IPSSTGSSTPTQAV). The span at 565–590 (KTSTPIHSTPKSSSSSAKKTAAQLQQ) shows a compositional bias: low complexity.

As to expression, expressed at low levels in excretory cell, pharynx, vulva, and posterior neurons in adults. Strongly expressed in the excretory cell and more weakly in the pharynx in larva. Embryonic expression in the excretory cell.

It localises to the nucleus. In terms of biological role, transcription factor which binds to the 5'-CCATACATTA-3' motif found in the promoter region of pgp-12 and activates its expression in the excretory cell. The chain is Transcription factor dcp-66 from Caenorhabditis elegans.